Here is a 113-residue protein sequence, read N- to C-terminus: UPF0416 protein RF_0879 (113 aa).

The protein belongs to the UPF0416 family.

This chain is UPF0416 protein RF_0879, found in Rickettsia felis (strain ATCC VR-1525 / URRWXCal2) (Rickettsia azadi).